The sequence spans 267 residues: Glutamate racemase (267 aa).

Residues 13 to 14 and 45 to 46 contribute to the substrate site; these read DS and YS. Cys77 serves as the catalytic Proton donor/acceptor. 78-79 serves as a coordination point for substrate; the sequence is NT. The active-site Proton donor/acceptor is Cys188. Residue 189-190 coordinates substrate; sequence TH.

Belongs to the aspartate/glutamate racemases family.

It catalyses the reaction L-glutamate = D-glutamate. Its pathway is cell wall biogenesis; peptidoglycan biosynthesis. Functionally, provides the (R)-glutamate required for cell wall biosynthesis. In Histophilus somni (strain 2336) (Haemophilus somnus), this protein is Glutamate racemase.